A 426-amino-acid polypeptide reads, in one-letter code: Serine--tRNA ligase (426 aa).

L-serine is bound at residue 233–235 (TAE). ATP is bound at residue 264-266 (RSE). L-serine is bound at residue glutamate 287. 351-354 (EISS) contributes to the ATP binding site. Serine 387 is an L-serine binding site.

It belongs to the class-II aminoacyl-tRNA synthetase family. Type-1 seryl-tRNA synthetase subfamily. In terms of assembly, homodimer. The tRNA molecule binds across the dimer.

The protein localises to the cytoplasm. The enzyme catalyses tRNA(Ser) + L-serine + ATP = L-seryl-tRNA(Ser) + AMP + diphosphate + H(+). It catalyses the reaction tRNA(Sec) + L-serine + ATP = L-seryl-tRNA(Sec) + AMP + diphosphate + H(+). It functions in the pathway aminoacyl-tRNA biosynthesis; selenocysteinyl-tRNA(Sec) biosynthesis; L-seryl-tRNA(Sec) from L-serine and tRNA(Sec): step 1/1. Its function is as follows. Catalyzes the attachment of serine to tRNA(Ser). Is also able to aminoacylate tRNA(Sec) with serine, to form the misacylated tRNA L-seryl-tRNA(Sec), which will be further converted into selenocysteinyl-tRNA(Sec). This is Serine--tRNA ligase from Clostridium botulinum (strain Langeland / NCTC 10281 / Type F).